Consider the following 321-residue polypeptide: MITAPFFTLDRRDLLGIEGLSAPEIVGLLDLAEEFVVLNRQIEKKRSTLRGRTQVNLFFEASTRTQSSFELAGKRLGADVMNMSVGNSSVKKGETLIDTAMTLNAMRPDILVVRHHASGAVALLARKVDCCVVNAGDGAHEHPTQALLDALTIRRNKGRIEGLTVAVCGDVLHSRVARSNILLLHTLGARVRVVAPSTLLPTGIENFGVEVHRSMESGLEGADIVMMLRLQRERMAGSFIPSVKEYFHYYGLDEAKLKRAKPDALVMHPGPMNRGVEIDSAVADGAQSLIREQVEMGVAVRMAVLDALARKLPNATGAERD.

Positions 64 and 65 each coordinate carbamoyl phosphate. Residue Lys-92 participates in L-aspartate binding. Residues Arg-114, His-142, and Gln-145 each contribute to the carbamoyl phosphate site. Residues Arg-175 and Arg-229 each coordinate L-aspartate. Carbamoyl phosphate is bound by residues Gly-270 and Pro-271.

It belongs to the aspartate/ornithine carbamoyltransferase superfamily. ATCase family. In terms of assembly, heterododecamer (2C3:3R2) of six catalytic PyrB chains organized as two trimers (C3), and six regulatory PyrI chains organized as three dimers (R2).

The catalysed reaction is carbamoyl phosphate + L-aspartate = N-carbamoyl-L-aspartate + phosphate + H(+). Its pathway is pyrimidine metabolism; UMP biosynthesis via de novo pathway; (S)-dihydroorotate from bicarbonate: step 2/3. Functionally, catalyzes the condensation of carbamoyl phosphate and aspartate to form carbamoyl aspartate and inorganic phosphate, the committed step in the de novo pyrimidine nucleotide biosynthesis pathway. In Azorhizobium caulinodans (strain ATCC 43989 / DSM 5975 / JCM 20966 / LMG 6465 / NBRC 14845 / NCIMB 13405 / ORS 571), this protein is Aspartate carbamoyltransferase catalytic subunit.